Here is a 1164-residue protein sequence, read N- to C-terminus: Protein PLASTID MOVEMENT IMPAIRED 1-RELATED 1 (1164 aa).

The tract at residues 30–54 is disordered; the sequence is KNPRGSVAGSNKTPTKPLSRSNLAE. Over residues 37 to 51 the composition is skewed to polar residues; that stretch reads AGSNKTPTKPLSRSN. The C2 NT-type domain occupies 69 to 217; it reads INHVRNRRFN…TLSMSFGYTV (149 aa). Residues 224–263 are compositionally biased toward polar residues; that stretch reads PASSGSTQNFRSSSNVKQTSNNTGLTRAISAKSSLGNGKS. 4 disordered regions span residues 224–268, 466–486, 1038–1063, and 1124–1164; these read PASS…SRRY, APEE…PKDA, SELK…PMEE, and GSAK…IMPK. Composition is skewed to basic and acidic residues over residues 469-486 and 1052-1062; these read EGNK…PKDA and SDAKKEEKPME.

It localises to the cytoplasm. In terms of biological role, together with PMI1, necessary for chloroplast and nuclear photorelocation movements via the regulation of chloroplast-actin (cp-actin) filaments in pavement cells. This chain is Protein PLASTID MOVEMENT IMPAIRED 1-RELATED 1, found in Arabidopsis thaliana (Mouse-ear cress).